The primary structure comprises 192 residues: Shikimate kinase (192 aa).

Position 15–20 (15–20 (GAGKTT)) interacts with ATP. Thr19 contacts Mg(2+). 3 residues coordinate substrate: Asp37, Arg61, and Gly83. Arg121 lines the ATP pocket. Residue Arg140 participates in substrate binding.

The protein belongs to the shikimate kinase family. As to quaternary structure, monomer. Mg(2+) is required as a cofactor.

The protein localises to the cytoplasm. It catalyses the reaction shikimate + ATP = 3-phosphoshikimate + ADP + H(+). It participates in metabolic intermediate biosynthesis; chorismate biosynthesis; chorismate from D-erythrose 4-phosphate and phosphoenolpyruvate: step 5/7. Catalyzes the specific phosphorylation of the 3-hydroxyl group of shikimic acid using ATP as a cosubstrate. The sequence is that of Shikimate kinase from Cupriavidus pinatubonensis (strain JMP 134 / LMG 1197) (Cupriavidus necator (strain JMP 134)).